The sequence spans 60 residues: Cytotoxin SP15c (60 aa).

Cystine bridges form between Cys3-Cys21, Cys14-Cys38, Cys42-Cys53, and Cys54-Cys59.

It belongs to the three-finger toxin family. Short-chain subfamily. Type IA cytotoxin sub-subfamily. As to quaternary structure, monomer in solution; Homodimer and oligomer in the presence of negatively charged lipids forming a pore with a size ranging between 20 and 30 Angstroms. Expressed by the venom gland.

It localises to the secreted. It is found in the target cell membrane. In terms of biological role, shows cytolytic activity on many different cells by forming pore in lipid membranes. In vivo, increases heart rate or kills the animal by cardiac arrest. In addition, it binds to heparin with high affinity, interacts with Kv channel-interacting protein 1 (KCNIP1) in a calcium-independent manner, and binds to integrin alpha-V/beta-3 (ITGAV/ITGB3) with moderate affinity. In Naja atra (Chinese cobra), this protein is Cytotoxin SP15c.